Here is a 360-residue protein sequence, read N- to C-terminus: Protein NDRG2 (360 aa).

Residues 324–360 (SRTASLSSEGNRSRSRTLSQSSESGGGPPAPLAEVTC) are disordered.

It belongs to the NDRG family.

Its subcellular location is the cytoplasm. Contributes to the regulation of the Wnt signaling pathway. Down-regulates CTNNB1-mediated transcriptional activation of target genes. May be involved in neuron differentiation. The polypeptide is Protein NDRG2 (ndrg2) (Xenopus laevis (African clawed frog)).